The following is an 868-amino-acid chain: Coatomer subunit gamma (868 aa).

Residues 1 to 11 (MWRTKRGRTRR) show a composition bias toward basic residues. Residues 1–22 (MWRTKRGRTRRRDAGGNPWQNL) form a disordered region. HEAT repeat units lie at residues 64–101 (REATECFFAMTKLFQSKDVVMRRMVYLGIKELSPIADD), 287–324 (RELSTAVSILQLFCGSSKATLRFAAVRTMNKVAMLHPP), 326–359 (VNVCNLDLEGLIADSNRSVATLAITTLLKTGAES), and 360–396 (SVERLMKQIATFVAEISDEFKLVVVQAIRSLCTKFPR).

It belongs to the COPG family. As to quaternary structure, oligomeric complex that consists of at least the alpha, beta, beta', gamma, delta, epsilon and zeta subunits.

The protein resides in the cytoplasm. It localises to the golgi apparatus membrane. The protein localises to the cytoplasmic vesicle. Its subcellular location is the COPI-coated vesicle membrane. It is found in the endoplasmic reticulum. The coatomer is a cytosolic protein complex that binds to dilysine motifs and reversibly associates with Golgi non-clathrin-coated vesicles, which further mediate biosynthetic protein transport from the ER, via the Golgi up to the trans Golgi network. Coatomer complex is required for budding from Golgi membranes, and is essential for the retrograde Golgi-to-ER transport of dilysine-tagged proteins. The chain is Coatomer subunit gamma from Anopheles gambiae (African malaria mosquito).